A 105-amino-acid chain; its full sequence is Small ribosomal subunit protein eS24 (105 aa).

The segment at 85-105 (SVIAKNEEPEEEPEEEAEDAE) is disordered. Positions 92–105 (EPEEEPEEEAEDAE) are enriched in acidic residues.

The protein belongs to the eukaryotic ribosomal protein eS24 family.

The chain is Small ribosomal subunit protein eS24 from Methanosphaera stadtmanae (strain ATCC 43021 / DSM 3091 / JCM 11832 / MCB-3).